The primary structure comprises 336 residues: Speedy protein E1 (336 aa).

The disordered stretch occupies residues 16–50 (GVDPSPPCRSLGWKRKREWSDESEEEPEKELAPEP). Over residues 36-50 (DESEEEPEKELAPEP) the composition is skewed to acidic residues.

Belongs to the Speedy/Ringo family. In terms of tissue distribution, predominantly expressed in testis and heart.

The sequence is that of Speedy protein E1 from Homo sapiens (Human).